A 604-amino-acid chain; its full sequence is MTMRAARLSGSTGLTAALVAVLLVLTGCASLPESSAPQALGTIDREPTSEGPTPPIAGRDPDLLLRDFLQATADPTNRHLAARQYMTPAASAQWDDSTSTTIVEKPDTLLESRDGDRATYRIRAQRMAELSADGAYRAVNEPTLENKIEMVKVDGEWRIAELPDGVVMDITAFTKSYRRYVLYFADPSGNTAVPDLRWLSVPKNQLTQRLLSLLSEGPHGAIGAVVRNQLAAPVALRGPITKANGDPDDVGVGLGGVRLDFAGAAALSQRDKELLAGQVVLTLAQADIPGPYMLLADGRPLDERYATNGWSAADVEYLSPSVQAQNRIGLHALRDGALTQVTDNGVVETPGYFGSVNNLQSAALSPDGQLVAAVADAGRPAPEPPRTLMVGTYGGPAFPVAEGGSITRPSWTGDGSAAWAVIDGDRVIRAVNDRATGTVSVQGVDISGLTADPAGPALRLPITELRISRTGVRAALIADGKVYVAVVERRPDGGYALTAPVPVAVGLSTKATSLSWIGGDTLLIAREGNIDPVSTVLIDGSEWTPVTSQNLTPPVRVITAAPGAQYVADSRGVLELTSNTTSELHYWTEMPGLVGTDAAPVLPG.

An N-terminal signal peptide occupies residues 1 to 27; it reads MTMRAARLSGSTGLTAALVAVLLVLTG. The N-palmitoyl cysteine moiety is linked to residue Cys-28. Residue Cys-28 is the site of S-diacylglycerol cysteine attachment. The disordered stretch occupies residues 35–60; sequence SAPQALGTIDREPTSEGPTPPIAGRD.

The protein belongs to the LpqB lipoprotein family.

It is found in the cell membrane. The sequence is that of Lipoprotein LpqB from Nocardia farcinica (strain IFM 10152).